We begin with the raw amino-acid sequence, 456 residues long: Iroquois-class homeodomain protein irx-2 (456 aa).

Residues 110–172 (DPAYRKNATR…NARRRLKKEN (63 aa)) constitute a DNA-binding region (homeobox; TALE-type). 3 disordered regions span residues 172-214 (NKMT…AEDE), 246-320 (CESG…PASK), and 434-456 (RPTNFESKKDPSEVCTVGVQPYP). Basic and acidic residues-rich tracts occupy residues 192–205 (GERVKEEQSEKAQD) and 246–256 (CESGSESKEKY). Acidic residues predominate over residues 257 to 269 (DDDEDEEEGDEED). Over residues 291-318 (NHQQDGSPRNSNKTSLDNGMSPSSQTPA) the composition is skewed to polar residues.

Belongs to the TALE/IRO homeobox family. As to expression, expressed in the neural plate in overlapping patterns with other irx members, which all share an anterior border of expression. Also expressed in the placodes. Broadly expressed in the tailbud rhombencephalon (hindbrain). Outside the nervous system and at tailbud stages, expressed in the developing otic vesicle, branchial arches, prospective heart region and pronephros.

The protein localises to the nucleus. In terms of biological role, acts partially redundantly with other irx members in neural patterning. Required for formation of the posterior forebrain, midbrain, hindbrain, and to a lesser extent, spinal cord. Acts early in neural plate development to induce expression of some but not all proneural genes, and specify a neural precursor state. Also up-regulates repressors that prevent neuronal differentiation. Patterns the neuroectoderm in both the anterior/posterior and dorsal/ventral axes. Probably dispensable for pronephric kidney development. This Xenopus tropicalis (Western clawed frog) protein is Iroquois-class homeodomain protein irx-2.